Reading from the N-terminus, the 251-residue chain is Zinc import ATP-binding protein ZnuC (251 aa).

The ABC transporter domain occupies 5 to 220; the sequence is VSLENVSVSF…PEFISMFGPR (216 aa). An ATP-binding site is contributed by 37–44; the sequence is GPNGAGKS.

The protein belongs to the ABC transporter superfamily. Zinc importer (TC 3.A.1.15.5) family. The complex is composed of two ATP-binding proteins (ZnuC), two transmembrane proteins (ZnuB) and a solute-binding protein (ZnuA).

The protein resides in the cell inner membrane. The enzyme catalyses Zn(2+)(out) + ATP(in) + H2O(in) = Zn(2+)(in) + ADP(in) + phosphate(in) + H(+)(in). Part of the ABC transporter complex ZnuABC involved in zinc import. Responsible for energy coupling to the transport system. The chain is Zinc import ATP-binding protein ZnuC from Shigella flexneri serotype 5b (strain 8401).